The primary structure comprises 386 residues: Benzoyl-CoA reductase subunit C (386 aa).

This sequence belongs to the FldB/FldC dehydratase alpha/beta subunit family. As to quaternary structure, heterotetramer composed of A, B, C, and D subunits. Iron-sulfur cluster is required as a cofactor. Requires an oxidized flavin as cofactor.

The enzyme catalyses cyclohexa-1,5-diene-1-carbonyl-CoA + oxidized 2[4Fe-4S]-[ferredoxin] + 2 ADP + 2 phosphate = reduced 2[4Fe-4S]-[ferredoxin] + benzoyl-CoA + 2 ATP + 2 H2O. It catalyses the reaction 3-hydroxybenzoyl-CoA + AH2 + 2 ATP + 2 H2O = 3-hydroxycyclohexa-1,5-diene-1-carbonyl-CoA + A + 2 ADP + 2 phosphate + 2 H(+). Functionally, catalyzes the anaerobic reduction of benzoyl-CoA and 3-hydroxybenzoyl-CoA to form cyclohexa-1,5-diene-1-carbonyl-CoA and 3-hydroxycyclohexa-1,5-diene-1-carbonyl-CoA, respectively. The enzyme also reduces other benzoyl-CoA analogs with small substituents at the aromatic ring. The polypeptide is Benzoyl-CoA reductase subunit C (bcrC) (Thauera aromatica).